A 548-amino-acid polypeptide reads, in one-letter code: Eukaryotic translation initiation factor 3 subunit D (548 aa).

The residue at position 53 (lysine 53) is an N6-acetyllysine. Serine 161 is subject to Phosphoserine. The RNA gate stretch occupies residues 285 to 299 (DFDLPTVSETANEPP). Disordered regions lie at residues 288–309 (LPTV…FNSP) and 523–548 (PDGT…EEET). Residues 291–309 (VSETANEPPQDEGNSFNSP) are compositionally biased toward polar residues. A phosphoserine mark is found at serine 528 and serine 529. Residues 529–548 (SDEDEEEEEEEEEEEEEEET) show a composition bias toward acidic residues.

Belongs to the eIF-3 subunit D family. In terms of assembly, component of the eukaryotic translation initiation factor 3 (eIF-3) complex, which is composed of 13 subunits: EIF3A, EIF3B, EIF3C, EIF3D, EIF3E, EIF3F, EIF3G, EIF3H, EIF3I, EIF3J, EIF3K, EIF3L and EIF3M. The eIF-3 complex appears to include 3 stable modules: module A is composed of EIF3A, EIF3B, EIF3G and EIF3I; module B is composed of EIF3F, EIF3H, and EIF3M; and module C is composed of EIF3C, EIF3D, EIF3E, EIF3K and EIF3L. EIF3C of module C binds EIF3B of module A and EIF3H of module B, thereby linking the three modules. EIF3J is a labile subunit that binds to the eIF-3 complex via EIF3B. The eIF-3 complex interacts with RPS6KB1 under conditions of nutrient depletion. Mitogenic stimulation leads to binding and activation of a complex composed of MTOR and RPTOR, leading to phosphorylation and release of RPS6KB1 and binding of EIF4B to eIF-3.

It is found in the cytoplasm. MRNA cap-binding component of the eukaryotic translation initiation factor 3 (eIF-3) complex, a complex required for several steps in the initiation of protein synthesis of a specialized repertoire of mRNAs. The eIF-3 complex associates with the 40S ribosome and facilitates the recruitment of eIF-1, eIF-1A, eIF-2:GTP:methionyl-tRNAi and eIF-5 to form the 43S pre-initiation complex (43S PIC). The eIF-3 complex stimulates mRNA recruitment to the 43S PIC and scanning of the mRNA for AUG recognition. The eIF-3 complex is also required for disassembly and recycling of post-termination ribosomal complexes and subsequently prevents premature joining of the 40S and 60S ribosomal subunits prior to initiation. The eIF-3 complex specifically targets and initiates translation of a subset of mRNAs involved in cell proliferation, including cell cycling, differentiation and apoptosis, and uses different modes of RNA stem-loop binding to exert either translational activation or repression. In the eIF-3 complex, EIF3D specifically recognizes and binds the 7-methylguanosine cap of a subset of mRNAs. This is Eukaryotic translation initiation factor 3 subunit D from Pongo abelii (Sumatran orangutan).